Here is a 244-residue protein sequence, read N- to C-terminus: rRNA adenine N-6-methyltransferase (244 aa).

Residues N11, I13, G38, E59, D84, and N101 each contribute to the S-adenosyl-L-methionine site.

This sequence belongs to the class I-like SAM-binding methyltransferase superfamily. rRNA adenine N(6)-methyltransferase family.

The enzyme catalyses adenosine(2085) in 23S rRNA + 2 S-adenosyl-L-methionine = N(6)-dimethyladenosine(2085) in 23S rRNA + 2 S-adenosyl-L-homocysteine + 2 H(+). Its function is as follows. This protein produces a dimethylation of the adenine residue at position 2085 in 23S rRNA, resulting in reduced affinity between ribosomes and macrolide-lincosamide-streptogramin B antibiotics. In Staphylococcus aureus, this protein is rRNA adenine N-6-methyltransferase (ermC).